The sequence spans 112 residues: Pediocin PA-1 immunity protein (112 aa).

In terms of biological role, imparts immunity to pediocin PA-1/ACH to naturally sensitive host strains. This Pediococcus acidilactici protein is Pediocin PA-1 immunity protein (pedB).